A 71-amino-acid polypeptide reads, in one-letter code: uncharacterized protein (71 aa).

Belongs to the varicellovirus ORF57 protein family.

This is an uncharacterized protein from Homo sapiens (Human).